The primary structure comprises 183 residues: Phosphinothricin N-acetyltransferase (183 aa).

Residues 8–173 enclose the N-acetyltransferase domain; it reads ADIRRATEAD…WQLDFSLPVP (166 aa). Acetyl-CoA-binding positions include 91-93, 99-104, and Asn-130; these read VYV and RTGLGS.

Belongs to the acetyltransferase family. PAT/BAR subfamily.

The enzyme catalyses phosphinothricin + acetyl-CoA = N-acetylphosphinothricin + CoA + H(+). In terms of biological role, inactivates phosphinothricin (PPT) by transfer of an acetyl group from acetyl CoA. Can also acetylate demethylphosphinothricin but not PTT or glutamate. This enzyme is an effector of phosphinothricin tripeptide (PTT or bialaphos) resistance. This Streptomyces hygroscopicus protein is Phosphinothricin N-acetyltransferase.